The chain runs to 625 residues: MVVKKRKLATEAGGSDERPKYLPGKHPKNQEKTPHVDYNAPLNPKSELFLDDWHIPKFNRFISFTLDVLIDKYKDIFKDFIKLPSRKFHPQYYYKIQQPMSINEIKSRDYEYEDGPSNFLLDVELLTKNCQAYNEYDSLIVKNSMQVVMLIEFEVLKAKNLKRNYLINSEVKAKLLHYLNKLVDATEKKINQALLGASSPKNLDDKVKLSEPFMELVDKDELPEYYEIVHSPMALSIVKQNLEIGQYSKIYDFIIDMLLVFQNAHIFNDPSALIYKDATTLTNYFNYLIQKEFFPELQDLNERGEINLEFDKFEFENYLAIGGGGPAAAGALAISALDNDIEPESNREDLIDQADYDFNHFEGLGNGYNRSLLTEDYLLNPNNFKKLIAKPETVQSEVKNERSTTSDIEKTNSLESEHLKIPKYNVIKSMQKEMQSLSEQHTMEYKPYKLIQQIYIFSSKNLYSQATKPLLGSRPSCNQNWVEYIFNGNELSQNENAFSFMLQPMQTFLTLQSHLTSSLKDTETLLTINKEPVKSRTSNVNSNLSQPQQQENDVIGNDTKQDIENLTIGGGNNNDIVGNDNDKRNNITEIFDIRLSEGLNHLMFRCEDKISHETEFMNFWINVLP.

The segment at 1-35 is disordered; the sequence is MVVKKRKLATEAGGSDERPKYLPGKHPKNQEKTPH. Bromo domains are found at residues 53 to 158 and 181 to 292; these read WHIP…VLKA and KLVD…IQKE. A phosphoserine mark is found at Ser199 and Ser545. Residues 536–552 are compositionally biased toward polar residues; the sequence is RTSNVNSNLSQPQQQEN. The segment at 536–555 is disordered; the sequence is RTSNVNSNLSQPQQQENDVI.

In terms of assembly, component of the two forms of the RSC complex composed of at least either RSC1 or RSC2, and ARP7, ARP9, LDB7, NPL6, RSC3, RSC30, RSC4, RSC58, RSC6, RSC8, RSC9, SFH1, STH1, HTL1 and probably RTT102. The complexes interact with histone and histone variant components of centromeric chromatin.

It localises to the nucleus. In terms of biological role, component of the chromatin structure remodeling complex (RSC), which is involved in transcription regulation and nucleosome positioning. RSC is responsible for the transfer of a histone octamer from a nucleosome core particle to naked DNA. The reaction requires ATP and involves an activated RSC-nucleosome intermediate. Remodeling reaction also involves DNA translocation, DNA twist and conformational change. As a reconfigurer of centromeric and flanking nucleosomes, RSC complex is required both for proper kinetochore function in chromosome segregation and, via a PKC1-dependent signaling pathway, for organization of the cellular cytoskeleton. The chain is Chromatin structure-remodeling complex subunit RSC4 (RSC4) from Saccharomyces cerevisiae (strain ATCC 204508 / S288c) (Baker's yeast).